An 818-amino-acid polypeptide reads, in one-letter code: RNA-directed RNA polymerase (818 aa).

The RdRp catalytic domain maps to 524–641 (PVAIGLDASR…IVERRNLKQI (118 aa)).

The protein belongs to the tombusviridae RNA polymerase family.

It carries out the reaction RNA(n) + a ribonucleoside 5'-triphosphate = RNA(n+1) + diphosphate. In terms of biological role, RNA-dependent RNA polymerase that plays an essential role in the virus replication. The sequence is that of RNA-directed RNA polymerase from Tomato bushy stunt virus (strain Cherry) (TBSV).